The sequence spans 342 residues: Ribosomal RNA small subunit methyltransferase H (342 aa).

S-adenosyl-L-methionine contacts are provided by residues G43–Y45, D61, F87, D108, and Q115. The tract at residues A322–R342 is disordered.

This sequence belongs to the methyltransferase superfamily. RsmH family.

The protein localises to the cytoplasm. It catalyses the reaction cytidine(1402) in 16S rRNA + S-adenosyl-L-methionine = N(4)-methylcytidine(1402) in 16S rRNA + S-adenosyl-L-homocysteine + H(+). Its function is as follows. Specifically methylates the N4 position of cytidine in position 1402 (C1402) of 16S rRNA. The protein is Ribosomal RNA small subunit methyltransferase H of Hyphomonas neptunium (strain ATCC 15444).